Consider the following 186-residue polypeptide: Elongation factor P (186 aa).

This sequence belongs to the elongation factor P family.

It localises to the cytoplasm. It functions in the pathway protein biosynthesis; polypeptide chain elongation. Its function is as follows. Involved in peptide bond synthesis. Stimulates efficient translation and peptide-bond synthesis on native or reconstituted 70S ribosomes in vitro. Probably functions indirectly by altering the affinity of the ribosome for aminoacyl-tRNA, thus increasing their reactivity as acceptors for peptidyl transferase. This Cupriavidus pinatubonensis (strain JMP 134 / LMG 1197) (Cupriavidus necator (strain JMP 134)) protein is Elongation factor P.